Consider the following 416-residue polypeptide: S-adenosylmethionine synthase (416 aa).

Residue histidine 14 coordinates ATP. Position 16 (aspartate 16) interacts with Mg(2+). Glutamate 42 provides a ligand contact to K(+). Residues glutamate 55 and glutamine 98 each coordinate L-methionine. Positions glutamine 98 to arginine 108 are flexible loop. ATP-binding positions include aspartate 164–lysine 166, lysine 240–phenylalanine 241, aspartate 249, arginine 255–lysine 256, alanine 272, and lysine 276. Aspartate 249 serves as a coordination point for L-methionine. Lysine 280 lines the L-methionine pocket.

It belongs to the AdoMet synthase family. As to quaternary structure, homotetramer; dimer of dimers. The cofactor is Mg(2+). It depends on K(+) as a cofactor.

It is found in the cytoplasm. It catalyses the reaction L-methionine + ATP + H2O = S-adenosyl-L-methionine + phosphate + diphosphate. It functions in the pathway amino-acid biosynthesis; S-adenosyl-L-methionine biosynthesis; S-adenosyl-L-methionine from L-methionine: step 1/1. Its function is as follows. Catalyzes the formation of S-adenosylmethionine (AdoMet) from methionine and ATP. The overall synthetic reaction is composed of two sequential steps, AdoMet formation and the subsequent tripolyphosphate hydrolysis which occurs prior to release of AdoMet from the enzyme. The polypeptide is S-adenosylmethionine synthase (Flavobacterium johnsoniae (strain ATCC 17061 / DSM 2064 / JCM 8514 / BCRC 14874 / CCUG 350202 / NBRC 14942 / NCIMB 11054 / UW101) (Cytophaga johnsonae)).